The sequence spans 601 residues: Testis-specific gene 10 protein (601 aa).

The segment covering 1 to 10 has biased composition (basic residues); the sequence is MMRSRSKSPR. 2 disordered regions span residues 1–20 and 563–588; these read MMRS…RGAN and VSST…DRGL. The tract at residues 459-592 is interaction with HIF1A; sequence QMTNERISMQ…SPDRGLDRSL (134 aa). The segment covering 563 to 573 has biased composition (polar residues); that stretch reads VSSTMKPNTKC. The span at 574–588 shows a compositional bias: basic and acidic residues; sequence HSPERAHHRSPDRGL. Ser591 is modified (phosphoserine).

The protein belongs to the CEP135/TSGA10 family. Interacts with HIF1A. In terms of processing, processed into N-terminal 27-kDa and C-terminal 55-kDa fragments.

It is found in the cytoplasm. The protein localises to the cytoskeleton. The protein resides in the microtubule organizing center. Its subcellular location is the centrosome. It localises to the centriole. In terms of biological role, plays a role in spermatogenesis. When overexpressed, prevents nuclear localization of HIF1A. This is Testis-specific gene 10 protein (TSGA10) from Macaca fascicularis (Crab-eating macaque).